A 300-amino-acid chain; its full sequence is Acetyl-coenzyme A carboxylase carboxyl transferase subunit beta 2 (300 aa).

The CoA carboxyltransferase N-terminal domain occupies valine 26 to alanine 294. Cysteine 30, cysteine 33, cysteine 49, and cysteine 51 together coordinate Zn(2+). The C4-type zinc finger occupies cysteine 30–cysteine 51.

It belongs to the AccD/PCCB family. Acetyl-CoA carboxylase is a heterohexamer composed of biotin carboxyl carrier protein (AccB), biotin carboxylase (AccC) and two subunits each of ACCase subunit alpha (AccA) and ACCase subunit beta (AccD). Requires Zn(2+) as cofactor.

Its subcellular location is the cytoplasm. The enzyme catalyses N(6)-carboxybiotinyl-L-lysyl-[protein] + acetyl-CoA = N(6)-biotinyl-L-lysyl-[protein] + malonyl-CoA. It functions in the pathway lipid metabolism; malonyl-CoA biosynthesis; malonyl-CoA from acetyl-CoA: step 1/1. In terms of biological role, component of the acetyl coenzyme A carboxylase (ACC) complex. Biotin carboxylase (BC) catalyzes the carboxylation of biotin on its carrier protein (BCCP) and then the CO(2) group is transferred by the transcarboxylase to acetyl-CoA to form malonyl-CoA. This chain is Acetyl-coenzyme A carboxylase carboxyl transferase subunit beta 2, found in Roseiflexus castenholzii (strain DSM 13941 / HLO8).